A 284-amino-acid polypeptide reads, in one-letter code: 2-dehydro-3-deoxyphosphooctonate aldolase (284 aa).

It belongs to the KdsA family.

It localises to the cytoplasm. It carries out the reaction D-arabinose 5-phosphate + phosphoenolpyruvate + H2O = 3-deoxy-alpha-D-manno-2-octulosonate-8-phosphate + phosphate. It functions in the pathway carbohydrate biosynthesis; 3-deoxy-D-manno-octulosonate biosynthesis; 3-deoxy-D-manno-octulosonate from D-ribulose 5-phosphate: step 2/3. It participates in bacterial outer membrane biogenesis; lipopolysaccharide biosynthesis. This Mannheimia succiniciproducens (strain KCTC 0769BP / MBEL55E) protein is 2-dehydro-3-deoxyphosphooctonate aldolase.